We begin with the raw amino-acid sequence, 561 residues long: Putative transport protein YbjL (561 aa).

The next 5 membrane-spanning stretches (helical) occupy residues 8–28 (LLNG…LCLG), 32–52 (LGSI…LLGQ), 66–86 (FMLF…SIFF), 94–114 (MLAL…GKLF), and 158–178 (NLSL…IVGA). 2 consecutive RCK C-terminal domains span residues 202–288 (LDTD…SFRN) and 292–373 (VFDR…RIGF). 5 helical membrane passes run 383–403 (LLAF…TFQF), 406–426 (FSFG…LGFM), 451–471 (VFMA…LGAI), 475–495 (MLVA…LFGA), and 540–560 (AIAN…WPGL).

It belongs to the AAE transporter (TC 2.A.81) family. YbjL subfamily.

The protein resides in the cell membrane. The chain is Putative transport protein YbjL from Escherichia fergusonii (strain ATCC 35469 / DSM 13698 / CCUG 18766 / IAM 14443 / JCM 21226 / LMG 7866 / NBRC 102419 / NCTC 12128 / CDC 0568-73).